The sequence spans 300 residues: Tyrosine recombinase XerD (300 aa).

In terms of domain architecture, Core-binding (CB) spans 6-89 (LFHKRLIEQF…ALKVFFHFLK (84 aa)). Residues 108–293 (RLPSILSTEE…ASESLIEKFH (186 aa)) enclose the Tyr recombinase domain. Catalysis depends on residues arginine 152, lysine 174, histidine 245, arginine 248, and histidine 271. Tyrosine 280 acts as the O-(3'-phospho-DNA)-tyrosine intermediate in catalysis.

Belongs to the 'phage' integrase family. XerD subfamily. As to quaternary structure, forms a cyclic heterotetrameric complex composed of two molecules of XerC and two molecules of XerD.

It is found in the cytoplasm. In terms of biological role, site-specific tyrosine recombinase, which acts by catalyzing the cutting and rejoining of the recombining DNA molecules. The XerC-XerD complex is essential to convert dimers of the bacterial chromosome into monomers to permit their segregation at cell division. It also contributes to the segregational stability of plasmids. This is Tyrosine recombinase XerD from Chlamydia trachomatis serovar D (strain ATCC VR-885 / DSM 19411 / UW-3/Cx).